Reading from the N-terminus, the 136-residue chain is Histone H2A (136 aa).

Residues Met-1 to Ala-11 are compositionally biased toward gly residues. Positions Met-1–Ala-24 are disordered. Residues Lys-6 and Lys-10 each carry the N6-acetyllysine modification. The residue at position 107 (Gln-107) is an N5-methylglutamine. Ser-133 carries the post-translational modification Phosphoserine. A [ST]-Q motif motif is present at residues Ser-133 to Gln-134.

The protein belongs to the histone H2A family. In terms of assembly, the nucleosome is a histone octamer containing two molecules each of H2A, H2B, H3 and H4 assembled in one H3-H4 heterotetramer and two H2A-H2B heterodimers. The octamer wraps approximately 147 bp of DNA. Phosphorylated to form H2AS128ph (gamma-H2A) in response to DNA double-strand breaks (DSBs) generated by exogenous genotoxic agents and by stalled replication forks. Phosphorylation is dependent on the DNA damage checkpoint kinases MEC1/ATR and TEL1/ATM, spreads on either side of a detected DSB site and may mark the surrounding chromatin for recruitment of proteins required for DNA damage signaling and repair. Gamma-H2A is removed from the DNA prior to the strand invasion-primer extension step of the repair process and subsequently dephosphorylated. Dephosphorylation is necessary for efficient recovery from the DNA damage checkpoint. In terms of processing, acetylated by ESA1 to form H2AK4ac and H2AK7ac.

The protein localises to the nucleus. It is found in the chromosome. Its function is as follows. Core component of nucleosome which plays a central role in DNA double strand break (DSB) repair. Nucleosomes wrap and compact DNA into chromatin, limiting DNA accessibility to the cellular machineries which require DNA as a template. Histones thereby play a central role in transcription regulation, DNA repair, DNA replication and chromosomal stability. DNA accessibility is regulated via a complex set of post-translational modifications of histones, also called histone code, and nucleosome remodeling. The sequence is that of Histone H2A (HTA1) from Pyricularia oryzae (strain Y34) (Rice blast fungus).